Reading from the N-terminus, the 113-residue chain is Dolichyl-diphosphooligosaccharide--protein glycosyltransferase subunit dad1 (113 aa).

At 1 to 30 (MSVSVFSVVSRFLDEYVSSTPQRLKLLDAY) the chain is on the cytoplasmic side. Residues 31-51 (LLYILLTGALQFLYCLLVGTF) form a helical membrane-spanning segment. Proline 52 is a topological domain (lumenal). A helical membrane pass occupies residues 53–73 (FNSFLSGFISSVGSFILAVCL). The Cytoplasmic segment spans residues 74–92 (RIQINPQNKSDFQGISPER). Residues 93–113 (AFADFLFANTILHLVVVNFIG) form a helical membrane-spanning segment.

It belongs to the DAD/OST2 family. In terms of assembly, component of the oligosaccharyltransferase (OST) complex.

The protein resides in the endoplasmic reticulum membrane. Its pathway is protein modification; protein glycosylation. In terms of biological role, subunit of the oligosaccharyl transferase (OST) complex that catalyzes the initial transfer of a defined glycan (Glc(3)Man(9)GlcNAc(2) in eukaryotes) from the lipid carrier dolichol-pyrophosphate to an asparagine residue within an Asn-X-Ser/Thr consensus motif in nascent polypeptide chains, the first step in protein N-glycosylation. N-glycosylation occurs cotranslationally and the complex associates with the Sec61 complex at the channel-forming translocon complex that mediates protein translocation across the endoplasmic reticulum (ER). All subunits are required for a maximal enzyme activity. The chain is Dolichyl-diphosphooligosaccharide--protein glycosyltransferase subunit dad1 from Xenopus laevis (African clawed frog).